Consider the following 351-residue polypeptide: MKSLKMLYPLFMLLVLSSKIDLSNQDVIDNILMSLSKGITYFDMQGSNINLDGVVGYIILQAQLREATRTWPHSDFLSLSQRAAAISMLKRLSKSLSTAASTLQETDPKYFKEFEPILDSSFWSLPGEWSSTDPSLVYTSVRAMECYDEHMSDKCMTFLLGTWKDNGTPCIVTKTCRDTMTQFGCPHYSLSHQLLYFMIGTMKGCSKMLKGDLRLSRVNITVGHYKRIFCSNMMKSNQDIFKNSLTGQMQDIFIENILLCGLVGFSDFYKLDWLQSILTWQDQEAGCFGKEEDISHIFEEFLDAPHKRVKRREKTLTDGCSSHMTGVAVSALGGFLNFYLSEQDITKRPII.

A signal peptide spans 1-25 (MKSLKMLYPLFMLLVLSSKIDLSNQ).

It belongs to the UPF0764 family. In terms of assembly, homodimer.

The protein localises to the secreted. The protein is UPF0764 protein C16orf89 homolog of Danio rerio (Zebrafish).